Consider the following 693-residue polypeptide: Elongation factor G (693 aa).

Residues 8 to 282 form the tr-type G domain; that stretch reads EKFRNFGIMA…AVVDYLPSPI (275 aa). GTP contacts are provided by residues 17-24, 81-85, and 135-138; these read AHIDAGKT, DTPGH, and NKMD.

This sequence belongs to the TRAFAC class translation factor GTPase superfamily. Classic translation factor GTPase family. EF-G/EF-2 subfamily.

Its subcellular location is the cytoplasm. Its function is as follows. Catalyzes the GTP-dependent ribosomal translocation step during translation elongation. During this step, the ribosome changes from the pre-translocational (PRE) to the post-translocational (POST) state as the newly formed A-site-bound peptidyl-tRNA and P-site-bound deacylated tRNA move to the P and E sites, respectively. Catalyzes the coordinated movement of the two tRNA molecules, the mRNA and conformational changes in the ribosome. This chain is Elongation factor G, found in Mycoplasmoides gallisepticum (strain R(low / passage 15 / clone 2)) (Mycoplasma gallisepticum).